The following is a 351-amino-acid chain: MTIAIGREQERGWFDLLDDWLKRDRFVFIGWSGILLFPCAYLALGAWFTGTTFVSSWYTHGLASSYLEGCNFLTAAVSSPANSMGHSLLFLWGPEAQGDFTRWCQIGGLWTFTALHGSFGLIGFCLRQFEIARLVGLRPYNAIAFSGPIAVFVSVFLLYPLGQASWFFAPSFGVAAIFRFLLFLQGFHNWTLNPFHMMGVAGILGGALLCAIHGATVENTLFEDGEASDTFRAFTPTQSEETYSMVTANRFWSQIFGVAFANKRWLHFFLLFVPVTGLWVSSIGIVGLALNLRAYDFVSQEIRAAEDPEFETFYTKNILLNEGIRAWMAAQDQPHENFVFPEEVLPRGNAL.

The chain crosses the membrane as a helical span at residues 39–59 (CAYLALGAWFTGTTFVSSWYT). His116 lines the chlorophyll a pocket. Residues 123–139 (GFCLRQFEIARLVGLRP) form a helical membrane-spanning segment. Positions 128 and 141 each coordinate pheophytin a. A helical transmembrane segment spans residues 151–164 (VFVSVFLLYPLGQA). A chlorophyll a-binding site is contributed by His196. A helical transmembrane segment spans residues 206–226 (GALLCAIHGATVENTLFEDGE). A plastoquinone contacts are provided by His213 and Phe260. Residue His213 coordinates Fe cation. Residue His267 participates in Fe cation binding. The helical transmembrane segment at 277–293 (GLWVSSIGIVGLALNLR) threads the bilayer.

This sequence belongs to the reaction center PufL/M/PsbA/D family. As to quaternary structure, PSII is composed of 1 copy each of membrane proteins PsbA, PsbB, PsbC, PsbD, PsbE, PsbF, PsbH, PsbI, PsbJ, PsbK, PsbL, PsbM, PsbT, PsbY, PsbZ, Psb30/Ycf12, at least 3 peripheral proteins of the oxygen-evolving complex and a large number of cofactors. It forms dimeric complexes. The cofactor is The D1/D2 heterodimer binds P680, chlorophylls that are the primary electron donor of PSII, and subsequent electron acceptors. It shares a non-heme iron and each subunit binds pheophytin, quinone, additional chlorophylls, carotenoids and lipids. There is also a Cl(-1) ion associated with D1 and D2, which is required for oxygen evolution. The PSII complex binds additional chlorophylls, carotenoids and specific lipids..

It localises to the plastid. It is found in the chloroplast thylakoid membrane. The catalysed reaction is 2 a plastoquinone + 4 hnu + 2 H2O = 2 a plastoquinol + O2. Photosystem II (PSII) is a light-driven water:plastoquinone oxidoreductase that uses light energy to abstract electrons from H(2)O, generating O(2) and a proton gradient subsequently used for ATP formation. It consists of a core antenna complex that captures photons, and an electron transfer chain that converts photonic excitation into a charge separation. The D1/D2 (PsbA/PsbD) reaction center heterodimer binds P680, the primary electron donor of PSII as well as several subsequent electron acceptors. D2 is needed for assembly of a stable PSII complex. The sequence is that of Photosystem II D2 protein from Cyanidium caldarium (Red alga).